The sequence spans 92 residues: Small ribosomal subunit protein bS20 (92 aa).

The tract at residues 1–23 is disordered; sequence MANSPSAKKRAKQAEKRRSHNAS. Positions 7 to 20 are enriched in basic residues; it reads AKKRAKQAEKRRSH.

This sequence belongs to the bacterial ribosomal protein bS20 family.

Binds directly to 16S ribosomal RNA. This Ectopseudomonas mendocina (strain ymp) (Pseudomonas mendocina) protein is Small ribosomal subunit protein bS20.